The primary structure comprises 273 residues: Pre-mRNA-splicing factor CWC23 (273 aa).

Positions 15-87 (DLYALLEVSI…SLRATYNRWL (73 aa)) constitute a J domain.

This sequence belongs to the DnaJ family. In terms of assembly, associated with the spliceosome.

Its subcellular location is the cytoplasm. The protein resides in the nucleus. Functionally, involved in pre-mRNA splicing. May be involved in endoplasmic reticulum-associated protein degradation (ERAD) and required for growth at low and high temperatures. This chain is Pre-mRNA-splicing factor CWC23 (CWC23), found in Eremothecium gossypii (strain ATCC 10895 / CBS 109.51 / FGSC 9923 / NRRL Y-1056) (Yeast).